We begin with the raw amino-acid sequence, 566 residues long: Phenylalanine--tRNA ligase beta subunit (566 aa).

The region spanning 287–362 (YFQEEVEFDV…IGEGLASFYP (76 aa)) is the B5 domain. 4 residues coordinate Mg(2+): D340, D346, E349, and D350.

Belongs to the phenylalanyl-tRNA synthetase beta subunit family. Type 2 subfamily. Tetramer of two alpha and two beta subunits. Mg(2+) is required as a cofactor.

The protein localises to the cytoplasm. The enzyme catalyses tRNA(Phe) + L-phenylalanine + ATP = L-phenylalanyl-tRNA(Phe) + AMP + diphosphate + H(+). The chain is Phenylalanine--tRNA ligase beta subunit from Borrelia garinii subsp. bavariensis (strain ATCC BAA-2496 / DSM 23469 / PBi) (Borreliella bavariensis).